We begin with the raw amino-acid sequence, 683 residues long: Dipeptidyl-peptidase 5 (683 aa).

An N-terminal signal peptide occupies residues methionine 1–alanine 19. Asparagine 53, asparagine 69, asparagine 103, asparagine 116, asparagine 126, and asparagine 400 each carry an N-linked (GlcNAc...) asparagine glycan. Active-site charge relay system residues include serine 535, aspartate 617, and histidine 649.

The protein belongs to the peptidase S9C family.

The protein resides in the secreted. It is found in the cytoplasm. It localises to the nucleus. This is Dipeptidyl-peptidase 5 from Schizosaccharomyces pombe (strain 972 / ATCC 24843) (Fission yeast).